We begin with the raw amino-acid sequence, 258 residues long: MLIVVSPAKTLDYESPLVTHKFTQPELVDYSKQLIEVCRQLTPADVASLMKVSDKIADLNVGRFQEWSEEFTPDNARQAILAFKGDVYTGLEAETLNDDDFDYAQKHLRMLSGLYGLLKPLDLMQPYRLEMGTKLANPKGSNLYQFWGNVITEKLNEAIVAQGDNVLINLASNEYFKAVKPKALDAQVITPIFKDAKNGQYKVISFFAKKARGMMARYIIENRISSVADLTQFDSAGYYFVEEESTPTELVFKREEQH.

This sequence belongs to the UPF0246 family.

This is UPF0246 protein VV1_0535 from Vibrio vulnificus (strain CMCP6).